The chain runs to 337 residues: Visual pigment-like receptor peropsin (337 aa).

Over 1-26 (MLSEASDFNSSGSRSEGSVFSRTEHS) the chain is Extracellular. Residue Asn9 is glycosylated (N-linked (GlcNAc...) asparagine). Residues 27-49 (VIAAYLIVAGITSILSNVVVLGI) traverse the membrane as a helical segment. The Cytoplasmic segment spans residues 50–61 (FIKYKELRTPTN). The helical transmembrane segment at 62–87 (AVIINLAFTDIGVSSIGYPMSAASDL) threads the bilayer. Residues 88 to 101 (HGSWKFGHAGCQIY) are Extracellular-facing. A disulfide bridge links Cys98 with Cys175. Residues 102-121 (AGLNIFFGMVSIGLLTVVAM) traverse the membrane as a helical segment. Residues 122 to 140 (DRYLTISCPDVGRRMTTNT) are Cytoplasmic-facing. Residues 141-164 (YLSMILGAWINGLFWALMPIIGWA) form a helical membrane-spanning segment. Over 165–188 (SYAPDPTGATCTINWRNNDTSFVS) the chain is Extracellular. Asn182 carries N-linked (GlcNAc...) asparagine glycosylation. Residues 189–212 (YTMMVIVVNFIVPLTVMFYCYYHV) form a helical membrane-spanning segment. Topologically, residues 213 to 240 (SRSLRLYAASDCTAHLHRDWADQADVTK) are cytoplasmic. The chain crosses the membrane as a helical span at residues 241–264 (MSVIMILMFLLAWSPYSIVCLWAC). Residues 265–272 (FGNPKKIP) lie on the Extracellular side of the membrane. A helical transmembrane segment spans residues 273-297 (PSMAIIAPLFAKSSTFYNPCIYVAA). N6-(retinylidene)lysine is present on Lys284. The Cytoplasmic portion of the chain corresponds to 298-337 (HKKFRKAMLAMFKCQPHLAVPEPSTLPMDMPQSSLAPVRI).

Belongs to the G-protein coupled receptor 1 family. Opsin subfamily. As to expression, found only in the eye, where it is localized to the retinal pigment epithelium (RPE). In the RPE, it is localized to the microvilli that surround the photoreceptor outer segments.

The protein resides in the membrane. Functionally, may play a role in rpe physiology either by detecting light directly or by monitoring the concentration of retinoids or other photoreceptor-derived compounds. The polypeptide is Visual pigment-like receptor peropsin (Rrh) (Mus musculus (Mouse)).